A 348-amino-acid polypeptide reads, in one-letter code: DnaJ homolog subfamily B member 5 (348 aa).

Residues 4–68 (DYYKILGIPS…KKRGLYDQYG (65 aa)) enclose the J domain.

The chain is DnaJ homolog subfamily B member 5 (DNAJB5) from Homo sapiens (Human).